Consider the following 395-residue polypeptide: Chalcone synthase (395 aa).

An N-acetylvaline modification is found at Val-2. Val-2 bears the N-acetylalanine mark. The active site involves Cys-169.

Belongs to the thiolase-like superfamily. Chalcone/stilbene synthases family.

It catalyses the reaction (E)-4-coumaroyl-CoA + 3 malonyl-CoA + 3 H(+) = 2',4,4',6'-tetrahydroxychalcone + 3 CO2 + 4 CoA. The protein operates within secondary metabolite biosynthesis; flavonoid biosynthesis. Its function is as follows. The primary product of this enzyme is 4,2',4',6'-tetrahydroxychalcone (also termed naringenin-chalcone or chalcone) which can under specific conditions spontaneously isomerize into naringenin. In Arabidopsis thaliana (Mouse-ear cress), this protein is Chalcone synthase (CHS).